A 188-amino-acid polypeptide reads, in one-letter code: Adrenodoxin, mitochondrial (188 aa).

Residues Met1–Arg64 constitute a mitochondrion transit peptide. Residue Ser67 is modified to Phosphoserine. The 107-residue stretch at Asp69–Val175 folds into the 2Fe-2S ferredoxin-type domain. The residue at position 70 (Lys70) is an N6-acetyllysine; alternate. Lys70 is modified (N6-succinyllysine; alternate). Positions 110, 116, 119, and 156 each coordinate [2Fe-2S] cluster. Lys162 is modified (N6-succinyllysine). Ser181 bears the Phosphoserine mark.

Belongs to the adrenodoxin/putidaredoxin family. As to quaternary structure, interacts with CYP11A1. It depends on [2Fe-2S] cluster as a cofactor. Found in all tissues, most abundant in adrenals, ovaries and testes.

The protein localises to the mitochondrion matrix. In terms of biological role, essential for the synthesis of various steroid hormones. Participates in the reduction of mitochondrial cytochrome P450 for steroidogenesis. Transfers electrons from adrenodoxin reductase to CYP11A1, a cytochrome P450 that catalyzes cholesterol side-chain cleavage. Does not form a ternary complex with adrenodoxin reductase and CYP11A1 but shuttles between the two enzymes to transfer electrons. The sequence is that of Adrenodoxin, mitochondrial (Fdx1) from Rattus norvegicus (Rat).